Here is a 281-residue protein sequence, read N- to C-terminus: Mad-like protein 1 (281 aa).

Residues 71–80 are compositionally biased toward low complexity; sequence SCASNASTSS. Positions 71–105 are disordered; sequence SCASNASTSSQPYCSSPPARKSSKHSRTAHNELEK. A basic motif region spans residues 95–108; that stretch reads HSRTAHNELEKTRR. Residues 95–147 form the bHLH domain; that stretch reads HSRTAHNELEKTRRANLRGCLETLKMLVPCVSDATRNTTLALLTRARDHIIEL. Residues 109–147 form a helix-loop-helix motif region; it reads ANLRGCLETLKMLVPCVSDATRNTTLALLTRARDHIIEL. A coiled-coil region spans residues 144–185; that stretch reads IIELQDSNAAQMKKLNDLRDEQDELVAELAQLQADEEVAQAT. The tract at residues 189–213 is disordered; the sequence is CQTLSQSRPESRASSFTSTSSRDSP. Residues 200–212 show a composition bias toward low complexity; sequence RASSFTSTSSRDS.

Forms heterodimer with mxl-1 in the presence and absence of DNA. Ubiquitinated. Expressed in intestinal cells in adults. Expressed in D-type motor neuron cell bodies.

It is found in the nucleus. Functionally, transcriptional regulator which binds to the E box motif 5'-CACGTG-3', when in a heterodimeric complex with mxl-1. Involved in the control of lifespan in response to dietary restriction, the decline in protein homeostasis associated with normal aging, germline signaling and may overlap with the insulin-like signaling pathway. Plays a role in autophagy. Involved in promoting infection by the microsporidian pathogen N.parisii, possibly together with transcription factors pha-4 and zip-10. In response to neuronal injury, mdl-1 is targeted by sdz-33 for ubiquitin-mediated degradation, probably thereby reducing levels of mdl-1-mxl-1 heterodimers, allowing free mxl-1 to form complexes with tdpt-1 and thus inhibiting tdpt-1-dependent sumoylation of ets-4. The polypeptide is Mad-like protein 1 (Caenorhabditis elegans).